A 1086-amino-acid polypeptide reads, in one-letter code: DNA polymerase delta catalytic subunit (1086 aa).

The interval 1 to 64 (MTDRSSNEGV…KTSSFEDELA (64 aa)) is disordered. The span at 29–58 (EITDVKRRRLSERNGYGDKKGSSSKEKTSS) shows a compositional bias: basic and acidic residues. C993, C996, C1008, and C1011 together coordinate Zn(2+). The CysA-type zinc finger occupies 993 to 1011 (CLGCKAPIKKGKTALCENC). Positions 1040, 1043, 1053, and 1058 each coordinate [4Fe-4S] cluster. The short motif at 1040-1058 (CQRCQGSMHQDVICTSRDC) is the CysB motif element.

The protein belongs to the DNA polymerase type-B family. Heterotetramer that consist of the pol3, cdc1, cdc27 and cdm1 subunits. The pol3 subunit contains the polymerase active site and most likely the active site for the 3'-5' exonuclease activity. It depends on [4Fe-4S] cluster as a cofactor.

Its subcellular location is the nucleus. It catalyses the reaction DNA(n) + a 2'-deoxyribonucleoside 5'-triphosphate = DNA(n+1) + diphosphate. Functionally, catalytic component of DNA polymerase delta (DNA polymerase III) which participates in chromosomal DNA replication. Required during synthesis of the lagging DNA strands at the replication fork, binds at/or near replication origins and moves along DNA with the replication fork. Participates in leading strand synthesis during replication initiation and termination. Has 3'-5' proofreading exonuclease activity that corrects errors arising during DNA replication. The polypeptide is DNA polymerase delta catalytic subunit (pol3) (Schizosaccharomyces pombe (strain 972 / ATCC 24843) (Fission yeast)).